Here is an 87-residue protein sequence, read N- to C-terminus: MSSDLRLTLLELVRRLNGNATIESGRLPGGRRRSPDTTTGTTGVTKTTEGPKECIDPTSRPAPEGPQEEPLHDLRPRPANRKGAAVE.

The interval Leu-5 to Leu-16 is nuclear export signal. The interval Gly-18 to Glu-87 is disordered. Positions Asp-36–Thr-48 are enriched in low complexity.

In terms of assembly, interacts with P and N proteins. These interactions presumably promote nuclear targeting of the X protein in infected cells. Interacts with host MAVS; this interaction inhibits MAVS-induced apoptosis. Phosphorylated.

Its subcellular location is the host nucleus. It is found in the host mitochondrion. Its function is as follows. Plays an essential role in the inhibition of host apoptosis. Mediates host mitochondria-mediated apoptosis through interaction with the mitochondrial antiviral signaling protein/MAVS and thereby promotes viral persistence in host central nervous system. Within the host nucleus, regulates viral RNA synthesis and polymerase complex assembly. The protein is X protein (P/X) of Borna disease virus 1 (BoDV-1).